Consider the following 135-residue polypeptide: Glutaredoxin-C5 (135 aa).

Residues 29–134 enclose the Glutaredoxin domain; that stretch reads AERVERLASE…PLLKEAGALW (106 aa). C49 and C52 are disulfide-bonded. The Responsive for interaction with TGA factors motif lies at 132 to 135; sequence ALWL.

It belongs to the glutaredoxin family. CC-type subfamily.

It is found in the cytoplasm. Its subcellular location is the nucleus. In terms of biological role, has a glutathione-disulfide oxidoreductase activity in the presence of NADPH and glutathione reductase. Reduces low molecular weight disulfides and proteins. This is Glutaredoxin-C5 (GRXC5) from Oryza sativa subsp. japonica (Rice).